The sequence spans 411 residues: G2/mitotic-specific cyclin cig2 (411 aa).

Positions 51 to 60 (RTVLSDVSNV) match the Destruction box motif. Positions 57–89 (VSNVGKNNADEKDTKKAKRSFDESNLSTNEEAD) are disordered. Residues 64–78 (NADEKDTKKAKRSFD) are compositionally biased toward basic and acidic residues. A Cyclin N-terminal domain is found at 139–265 (EIFEYIRKLD…MLNVLNFDLS (127 aa)). Residues 181-273 (SNFCLMPETL…LSYPSPLNFL (93 aa)) form an interaction with pop1 region.

It belongs to the cyclin family. Cyclin AB subfamily. As to quaternary structure, associates with cdc2, res2 and rum1. Interacts with pop1 only when phosphorylated. Phosphorylated.

Its subcellular location is the nucleus. It localises to the cytoplasm. The protein localises to the cytoskeleton. The protein resides in the microtubule organizing center. It is found in the spindle pole body. Functionally, essential for the control of the cell cycle at the G2/M and G1/S (mitosis) transition. Interacts with the cdc2 protein kinase to form MPF. Interaction with res2 promotes the phosphorylation of res1 and inhibits MBF-dependent gene transcription. Forms an autoregulating feedback-inhibition loop with MBF which is important for normal regulation of the cell cycle. G2/M cyclins accumulate steadily during G2 and are abruptly destroyed at mitosis. Negatively regulates conjugation via interacting with cell cycle 'start' genes. Degraded by skp1, pop1 and pop2 in the G2 and M phases of the cell cycle. The polypeptide is G2/mitotic-specific cyclin cig2 (cig2) (Schizosaccharomyces pombe (strain 972 / ATCC 24843) (Fission yeast)).